The following is a 313-amino-acid chain: Protein-glutamine deamidase Cif (313 aa).

Residues C128, H186, and Q205 contribute to the active site.

The protein belongs to the Cif family.

The protein resides in the secreted. It is found in the host nucleus. The enzyme catalyses L-glutaminyl-[protein] + H2O = L-glutamyl-[protein] + NH4(+). Functionally, protein-glutamine deamidase effector that inhibits the host cell cycle and other key cellular processes such as the actin network and programmed-cell death. Acts by mediating the side chain deamidation of 'Gln-40' of host NEDD8, converting it to glutamate, thereby abolishing the activity of cullin-RING-based E3 ubiquitin-protein ligase complexes (CRL complexes). Inactivation of CRL complexes prevents ubiquitination and subsequent degradation of the cyclin-dependent kinase inhibitors CDKN1A/p21 and CDKN1B/p27, leading to G1 and G2 cell cycle arrests in host cells. Deamidation of 'Gln-40' of host NEDD8 also triggers macrophage-specific programmed cell death. Also able to catalyze deamidation of 'Gln-40' of host ubiquitin in vitro; however, NEDD8 constitutes the preferred substrate in vivo. This is Protein-glutamine deamidase Cif from Photorhabdus laumondii subsp. laumondii (strain DSM 15139 / CIP 105565 / TT01) (Photorhabdus luminescens subsp. laumondii).